Reading from the N-terminus, the 264-residue chain is Protein GrpE (264 aa).

The span at 36–49 (KVQSKKVSSDHSSS) shows a compositional bias: basic and acidic residues. The interval 36–59 (KVQSKKVSSDHSSSEDNASSDINS) is disordered. Residues 50–59 (EDNASSDINS) are compositionally biased toward low complexity.

This sequence belongs to the GrpE family. Homodimer.

The protein resides in the cytoplasm. Functionally, participates actively in the response to hyperosmotic and heat shock by preventing the aggregation of stress-denatured proteins, in association with DnaK and GrpE. It is the nucleotide exchange factor for DnaK and may function as a thermosensor. Unfolded proteins bind initially to DnaJ; upon interaction with the DnaJ-bound protein, DnaK hydrolyzes its bound ATP, resulting in the formation of a stable complex. GrpE releases ADP from DnaK; ATP binding to DnaK triggers the release of the substrate protein, thus completing the reaction cycle. Several rounds of ATP-dependent interactions between DnaJ, DnaK and GrpE are required for fully efficient folding. In Peanut witches'-broom phytoplasma, this protein is Protein GrpE.